A 39-amino-acid chain; its full sequence is Photosystem II reaction center protein Psb30 (39 aa).

Residues 12–32 traverse the membrane as a helical segment; it reads IFQLTFVGLIVIAGPIVIAVL.

It belongs to the Psb30/Ycf12 family. In terms of assembly, PSII is composed of 1 copy each of membrane proteins PsbA, PsbB, PsbC, PsbD, PsbE, PsbF, PsbH, PsbI, PsbJ, PsbK, PsbL, PsbM, PsbT, PsbX, PsbY, PsbZ, Psb30/Ycf12, peripheral proteins PsbO, CyanoQ (PsbQ), PsbU, PsbV and a large number of cofactors. It forms dimeric complexes.

The protein localises to the cellular thylakoid membrane. In terms of biological role, a core subunit of photosystem II (PSII), probably helps stabilize the reaction center. The sequence is that of Photosystem II reaction center protein Psb30 from Crocosphaera subtropica (strain ATCC 51142 / BH68) (Cyanothece sp. (strain ATCC 51142)).